The primary structure comprises 1250 residues: Bifunctional autolysin (1250 aa).

Positions 1–29 (MAKKFNYKLPSMVALTLVGSAVTAHQVQA) are cleaved as a signal peptide. Positions 103–138 (GDTRANQSATTNNTQPVAKSTSTTAPKTNTNVTNAG) are enriched in polar residues. Disordered regions lie at residues 103–151 (GDTR…NSEN) and 173–219 (AAAP…KYKP). Low complexity predominate over residues 173–196 (AAAPKAATTSAPKAKTEATPKVTT). Residues 199 to 769 (ASAQPRSVAA…AVAQPKTAVK (571 aa)) form an N-acetylmuramoyl-L-alanine amidase region. GW domains are found at residues 437-511 (TVAA…YNTA), 513-587 (SPVN…DTAK), 606-680 (TVSS…YNNA), 682-756 (SPVN…VPAA), 778-853 (TTQT…VQNL), 855-930 (KEVK…APTA), and 937-1011 (AAKD…KELI). The endo-beta-N-acetylglucosaminidase stretch occupies residues 770 to 1250 (AYTVTKPQTT…GKYFDIPQYK (481 aa)).

The protein in the N-terminal section; belongs to the N-acetylmuramoyl-L-alanine amidase 2 family. This sequence in the C-terminal section; belongs to the glycosyl hydrolase 73 family. In terms of assembly, oligomer; forms a ring structure at the cell surface which is important for efficient partitioning of daughter cells after cell division. Post-translationally, undergoes proteolytic processing to generate the two extracellular lytic enzymes, probably at the septal region on the cell surface.

Its subcellular location is the secreted. It catalyses the reaction Hydrolyzes the link between N-acetylmuramoyl residues and L-amino acid residues in certain cell-wall glycopeptides.. It carries out the reaction an N(4)-(oligosaccharide-(1-&gt;3)-[oligosaccharide-(1-&gt;6)]-beta-D-Man-(1-&gt;4)-beta-D-GlcNAc-(1-&gt;4)-alpha-D-GlcNAc)-L-asparaginyl-[protein] + H2O = an oligosaccharide-(1-&gt;3)-[oligosaccharide-(1-&gt;6)]-beta-D-Man-(1-&gt;4)-D-GlcNAc + N(4)-(N-acetyl-beta-D-glucosaminyl)-L-asparaginyl-[protein]. Its function is as follows. Endohydrolysis of the di-N-acetylchitobiosyl unit in high-mannose glycopeptides and glycoproteins containing the -[(Man)5(GlcNAc)2]-Asn structure. One N-acetyl-D-glucosamine residue remains attached to the protein; the rest of the oligosaccharide is released intact. Cleaves the peptidoglycan connecting the daughter cells at the end of the cell division cycle, resulting in the separation of the two newly divided cells. Acts as an autolysin in penicillin-induced lysis. The polypeptide is Bifunctional autolysin (atl) (Staphylococcus aureus (strain MSSA476)).